The following is a 332-amino-acid chain: Large ribosomal subunit protein mL44 (332 aa).

The transit peptide at 1–30 directs the protein to the mitochondrion; the sequence is MASGLVRLLQQGHRCLLAPVAPKLVPPVRG. The 143-residue stretch at 86–228 folds into the RNase III domain; that stretch reads DLLKTAFVNS…LITQMTGKEL (143 aa). The region spanning 236 to 306 is the DRBM domain; sequence NPMGLLVEEL…ARVALRKLYG (71 aa).

Belongs to the ribonuclease III family. Mitochondrion-specific ribosomal protein mL44 subfamily. As to quaternary structure, component of the mitochondrial large ribosomal subunit (mt-LSU). Mature mammalian 55S mitochondrial ribosomes consist of a small (28S) and a large (39S) subunit. The 28S small subunit contains a 12S ribosomal RNA (12S mt-rRNA) and 30 different proteins. The 39S large subunit contains a 16S rRNA (16S mt-rRNA), a copy of mitochondrial valine transfer RNA (mt-tRNA(Val)), which plays an integral structural role, and 52 different proteins.

The protein localises to the mitochondrion. In terms of biological role, component of the 39S subunit of mitochondrial ribosome. May have a function in the assembly/stability of nascent mitochondrial polypeptides exiting the ribosome. This Homo sapiens (Human) protein is Large ribosomal subunit protein mL44 (MRPL44).